Reading from the N-terminus, the 302-residue chain is Dermonecrotic toxin LiSicTox-alphaIA2bii (302 aa).

A signal peptide spans Ile1–Ala14. Residues Ala15–Arg22 constitute a propeptide that is removed on maturation. Residue His34 is part of the active site. Glu54 and Asp56 together coordinate Mg(2+). The active-site Nucleophile is His70. 2 cysteine pairs are disulfide-bonded: Cys74/Cys80 and Cys76/Cys219. Asp114 lines the Mg(2+) pocket. Asn279 carries an N-linked (GlcNAc...) asparagine glycan.

It belongs to the arthropod phospholipase D family. Class II subfamily. Mg(2+) is required as a cofactor. In terms of tissue distribution, expressed by the venom gland.

The protein resides in the secreted. It catalyses the reaction an N-(acyl)-sphingosylphosphocholine = an N-(acyl)-sphingosyl-1,3-cyclic phosphate + choline. The enzyme catalyses an N-(acyl)-sphingosylphosphoethanolamine = an N-(acyl)-sphingosyl-1,3-cyclic phosphate + ethanolamine. It carries out the reaction a 1-acyl-sn-glycero-3-phosphocholine = a 1-acyl-sn-glycero-2,3-cyclic phosphate + choline. The catalysed reaction is a 1-acyl-sn-glycero-3-phosphoethanolamine = a 1-acyl-sn-glycero-2,3-cyclic phosphate + ethanolamine. Functionally, dermonecrotic toxins cleave the phosphodiester linkage between the phosphate and headgroup of certain phospholipids (sphingolipid and lysolipid substrates), forming an alcohol (often choline) and a cyclic phosphate. This toxin acts on sphingomyelin (SM). It may also act on ceramide phosphoethanolamine (CPE), lysophosphatidylcholine (LPC) and lysophosphatidylethanolamine (LPE), but not on lysophosphatidylserine (LPS), and lysophosphatidylglycerol (LPG). It acts by transphosphatidylation, releasing exclusively cyclic phosphate products as second products. Induces dermonecrosis, hemolysis, increased vascular permeability, edema, inflammatory response, and platelet aggregation. This chain is Dermonecrotic toxin LiSicTox-alphaIA2bii, found in Loxosceles intermedia (Brown spider).